The following is a 457-amino-acid chain: Succinate-semialdehyde dehydrogenase [NADP(+)] (457 aa).

NADP(+) contacts are provided by residues 133 to 134 (WN), 157 to 160 (KHAS), and 209 to 210 (GS). The active-site Proton acceptor is E231. An NADP(+)-binding site is contributed by L232. C265 serves as the catalytic Nucleophile. E362 serves as a coordination point for NADP(+).

It belongs to the aldehyde dehydrogenase family.

It catalyses the reaction succinate semialdehyde + NADP(+) + H2O = succinate + NADPH + 2 H(+). Its function is as follows. Catalyzes the NADP(+)-dependent oxidation of succinate semialdehyde to succinate. It is believed to be the main source of succinate semialdehyde dehydrogenase activity in Mycobacterium. The polypeptide is Succinate-semialdehyde dehydrogenase [NADP(+)] (gabD1) (Mycobacterium leprae (strain TN)).